The primary structure comprises 499 residues: Glycerol kinase (499 aa).

An ADP-binding site is contributed by threonine 13. Residues threonine 13, threonine 14, and serine 15 each contribute to the ATP site. Threonine 13 provides a ligand contact to sn-glycerol 3-phosphate. Arginine 17 is a binding site for ADP. Sn-glycerol 3-phosphate-binding residues include arginine 83, glutamate 84, tyrosine 135, and aspartate 245. Glycerol contacts are provided by arginine 83, glutamate 84, tyrosine 135, aspartate 245, and glutamine 246. ADP contacts are provided by threonine 267 and glycine 310. The ATP site is built by threonine 267, glycine 310, glutamine 314, and alanine 411. ADP is bound by residues alanine 411 and asparagine 415.

The protein belongs to the FGGY kinase family.

It catalyses the reaction glycerol + ATP = sn-glycerol 3-phosphate + ADP + H(+). It functions in the pathway polyol metabolism; glycerol degradation via glycerol kinase pathway; sn-glycerol 3-phosphate from glycerol: step 1/1. With respect to regulation, inhibited by fructose 1,6-bisphosphate (FBP). In terms of biological role, key enzyme in the regulation of glycerol uptake and metabolism. Catalyzes the phosphorylation of glycerol to yield sn-glycerol 3-phosphate. The protein is Glycerol kinase of Xylella fastidiosa (strain M12).